A 299-amino-acid polypeptide reads, in one-letter code: Oxygen-dependent coproporphyrinogen-III oxidase (299 aa).

Ser-92 contacts substrate. Mn(2+) contacts are provided by His-96 and His-106. His-106 acts as the Proton donor in catalysis. Position 108–110 (108–110 (NVR)) interacts with substrate. 2 residues coordinate Mn(2+): His-145 and His-175. An important for dimerization region spans residues 240 to 275 (YVEFNLVWDRGTLFGLQTGGRTESILMSMPPLVRWE). 258–260 (GGR) is a substrate binding site.

It belongs to the aerobic coproporphyrinogen-III oxidase family. As to quaternary structure, homodimer. It depends on Mn(2+) as a cofactor.

The protein resides in the cytoplasm. It catalyses the reaction coproporphyrinogen III + O2 + 2 H(+) = protoporphyrinogen IX + 2 CO2 + 2 H2O. It functions in the pathway porphyrin-containing compound metabolism; protoporphyrin-IX biosynthesis; protoporphyrinogen-IX from coproporphyrinogen-III (O2 route): step 1/1. Its function is as follows. Involved in the heme biosynthesis. Catalyzes the aerobic oxidative decarboxylation of propionate groups of rings A and B of coproporphyrinogen-III to yield the vinyl groups in protoporphyrinogen-IX. This chain is Oxygen-dependent coproporphyrinogen-III oxidase, found in Escherichia coli (strain K12 / MC4100 / BW2952).